The primary structure comprises 352 residues: MKKIVFTGGGTVGHVTLNLLLMPKFIEDGWEVHYIGDKRGIEHQEILKSGLDVTFHSIATGKLRRYFSWQNMLDVFKVGWGIVQSLFIMLRLRPQTLFSKGGFVSVPPVIAARVSGVPVFIHESDLSMGLANKIAYKFATKMYSTFEQASSLSKVEHVGAVTKVSDQKNPEPDELVDIQTHFNHKLPTVLFVGGSAGARVFNQLVTDHKKELTERYNIINLTGDSSLNELSQNLFRVDYVTDLYQPLMELADIVVTRGGANTIFELLAIAKLHVIVPLGREASRGDQIENAAYFVKKGYAEDLQESDLTLDSLEEKLSHLLSHKEDYQAKMKASKELKSLADFYQLLKKDLS.

UDP-N-acetyl-alpha-D-glucosamine is bound by residues S195 and Q287.

This sequence belongs to the glycosyltransferase 28 family. MurG subfamily.

The protein localises to the cell membrane. It catalyses the reaction Mur2Ac(oyl-L-Ala-gamma-D-Glu-L-Lys-D-Ala-D-Ala)-di-trans,octa-cis-undecaprenyl diphosphate + UDP-N-acetyl-alpha-D-glucosamine = beta-D-GlcNAc-(1-&gt;4)-Mur2Ac(oyl-L-Ala-gamma-D-Glu-L-Lys-D-Ala-D-Ala)-di-trans,octa-cis-undecaprenyl diphosphate + UDP + H(+). It functions in the pathway cell wall biogenesis; peptidoglycan biosynthesis. In terms of biological role, cell wall formation. Catalyzes the transfer of a GlcNAc subunit on undecaprenyl-pyrophosphoryl-MurNAc-pentapeptide (lipid intermediate I) to form undecaprenyl-pyrophosphoryl-MurNAc-(pentapeptide)GlcNAc (lipid intermediate II). This chain is UDP-N-acetylglucosamine--N-acetylmuramyl-(pentapeptide) pyrophosphoryl-undecaprenol N-acetylglucosamine transferase, found in Streptococcus pneumoniae (strain ATCC BAA-255 / R6).